Here is a 447-residue protein sequence, read N- to C-terminus: Glutamyl-tRNA reductase (447 aa).

Substrate-binding positions include 45-48 (TCNR), Ser111, 116-118 (ETE), and Gln122. The Nucleophile role is filled by Cys46. 191–196 (GTGKYA) contacts NADP(+).

It belongs to the glutamyl-tRNA reductase family. As to quaternary structure, homodimer.

It catalyses the reaction (S)-4-amino-5-oxopentanoate + tRNA(Glu) + NADP(+) = L-glutamyl-tRNA(Glu) + NADPH + H(+). Its pathway is porphyrin-containing compound metabolism; protoporphyrin-IX biosynthesis; 5-aminolevulinate from L-glutamyl-tRNA(Glu): step 1/2. Its function is as follows. Catalyzes the NADPH-dependent reduction of glutamyl-tRNA(Glu) to glutamate 1-semialdehyde (GSA). The protein is Glutamyl-tRNA reductase of Tropheryma whipplei (strain Twist) (Whipple's bacillus).